Consider the following 208-residue polypeptide: Small ribosomal subunit protein uS4 (208 aa).

Residues 29 to 48 are disordered; sequence MERRPYGPGQHGRARRKQDS. An S4 RNA-binding domain is found at 95–155; sequence QRLDALVLRA…ERSEKMVPFQ (61 aa).

This sequence belongs to the universal ribosomal protein uS4 family. In terms of assembly, part of the 30S ribosomal subunit. Contacts protein S5. The interaction surface between S4 and S5 is involved in control of translational fidelity.

In terms of biological role, one of the primary rRNA binding proteins, it binds directly to 16S rRNA where it nucleates assembly of the body of the 30S subunit. With S5 and S12 plays an important role in translational accuracy. The protein is Small ribosomal subunit protein uS4 of Micrococcus luteus (strain ATCC 4698 / DSM 20030 / JCM 1464 / CCM 169 / CCUG 5858 / IAM 1056 / NBRC 3333 / NCIMB 9278 / NCTC 2665 / VKM Ac-2230) (Micrococcus lysodeikticus).